An 85-amino-acid polypeptide reads, in one-letter code: MAHKKAGGSTRNGRDSESKRLGVKRFGGQVVIPGNILVRQRGTQFHPGVGVQIGKDHTLFAVVEGQVKFEVKGKLKRRTVSVVAA.

Residues 1–22 form a disordered region; that stretch reads MAHKKAGGSTRNGRDSESKRLG.

The protein belongs to the bacterial ribosomal protein bL27 family.

This is Large ribosomal subunit protein bL27 from Marinomonas sp. (strain MWYL1).